A 607-amino-acid polypeptide reads, in one-letter code: Probable LRR receptor-like serine/threonine-protein kinase At5g65240 (607 aa).

The first 24 residues, 1–24, serve as a signal peptide directing secretion; it reads MALLIITALVFSSLWSSVSPDAQG. Topologically, residues 25–219 are extracellular; the sequence is DALFALRSSL…SGDSSSRKTG (195 aa). Residues N74 and N110 are each glycosylated (N-linked (GlcNAc...) asparagine). 4 LRR repeats span residues 87–111, 112–135, 137–159, and 160–183; these read LTTL…IGNL, SSLT…LGNL, NLQF…LTGL, and SKLI…LFKI. N149, N171, N187, and N192 each carry an N-linked (GlcNAc...) asparagine glycan. A helical transmembrane segment spans residues 220–240; it reads IIAGVVSGIAVILLGFFFFFF. At 241–607 the chain is on the cytoplasmic side; the sequence is CKDKHKGYKR…QDAIELSGGR (367 aa). Residue T281 is modified to Phosphothreonine. One can recognise a Protein kinase domain in the interval 284–568; it reads FSEKNVLGQG…EGEGLAERWE (285 aa). Position 290-298 (290-298) interacts with ATP; the sequence is LGQGGFGKV. T307 carries the post-translational modification Phosphothreonine. K312 contributes to the ATP binding site. S365 is subject to Phosphoserine. The active-site Proton acceptor is the D411. A phosphothreonine mark is found at T444, T445, and T450. S460 bears the Phosphoserine mark. T461 bears the Phosphothreonine mark. Residue S465 is modified to Phosphoserine. At T541 the chain carries Phosphothreonine.

This sequence belongs to the protein kinase superfamily. Ser/Thr protein kinase family.

Its subcellular location is the cell membrane. It catalyses the reaction L-seryl-[protein] + ATP = O-phospho-L-seryl-[protein] + ADP + H(+). It carries out the reaction L-threonyl-[protein] + ATP = O-phospho-L-threonyl-[protein] + ADP + H(+). This is Probable LRR receptor-like serine/threonine-protein kinase At5g65240 from Arabidopsis thaliana (Mouse-ear cress).